Consider the following 296-residue polypeptide: Cytidine deaminase (296 aa).

2 consecutive CMP/dCMP-type deaminase domains span residues 47-167 (DSHE…FGPA) and 186-296 (ESDD…VDPV). Residue 88–90 (NLE) participates in substrate binding. His-101 lines the Zn(2+) pocket. The Proton donor role is filled by Glu-103. Residues Cys-128 and Cys-131 each contribute to the Zn(2+) site.

It belongs to the cytidine and deoxycytidylate deaminase family. In terms of assembly, homodimer. Zn(2+) is required as a cofactor.

The enzyme catalyses cytidine + H2O + H(+) = uridine + NH4(+). It carries out the reaction 2'-deoxycytidine + H2O + H(+) = 2'-deoxyuridine + NH4(+). Functionally, this enzyme scavenges exogenous and endogenous cytidine and 2'-deoxycytidine for UMP synthesis. The chain is Cytidine deaminase from Shewanella amazonensis (strain ATCC BAA-1098 / SB2B).